A 446-amino-acid polypeptide reads, in one-letter code: Signal recognition particle protein (446 aa).

Residues 106 to 113 (GLQGSGKT), 188 to 192 (DTAGR), and 246 to 249 (SKLD) contribute to the GTP site.

It belongs to the GTP-binding SRP family. SRP54 subfamily. In terms of assembly, part of the signal recognition particle protein translocation system, which is composed of SRP and FtsY.

It is found in the cytoplasm. The enzyme catalyses GTP + H2O = GDP + phosphate + H(+). Its function is as follows. Involved in targeting and insertion of nascent membrane proteins into the cytoplasmic membrane. Binds to the hydrophobic signal sequence of the ribosome-nascent chain (RNC) as it emerges from the ribosomes. The SRP-RNC complex is then targeted to the cytoplasmic membrane where it interacts with the SRP receptor FtsY. This Mycoplasma genitalium (strain ATCC 33530 / DSM 19775 / NCTC 10195 / G37) (Mycoplasmoides genitalium) protein is Signal recognition particle protein.